A 467-amino-acid chain; its full sequence is ATP-dependent protease ATPase subunit HslU (467 aa).

ATP is bound by residues valine 22 and 64–69 (GVGKTE). The tract at residues 146 to 185 (KASNNSNPLESLLGGAIPNFGNNDDEEEETPTEEIKTKRS) is disordered. Residues 168 to 177 (NDDEEEETPT) are compositionally biased toward acidic residues. The ATP site is built by aspartate 280, glutamate 345, and arginine 417.

It belongs to the ClpX chaperone family. HslU subfamily. In terms of assembly, a double ring-shaped homohexamer of HslV is capped on each side by a ring-shaped HslU homohexamer. The assembly of the HslU/HslV complex is dependent on binding of ATP.

The protein resides in the cytoplasm. Functionally, ATPase subunit of a proteasome-like degradation complex; this subunit has chaperone activity. The binding of ATP and its subsequent hydrolysis by HslU are essential for unfolding of protein substrates subsequently hydrolyzed by HslV. HslU recognizes the N-terminal part of its protein substrates and unfolds these before they are guided to HslV for hydrolysis. This Staphylococcus haemolyticus (strain JCSC1435) protein is ATP-dependent protease ATPase subunit HslU.